A 279-amino-acid chain; its full sequence is Movement protein (279 aa).

Belongs to the cucumovirus movement protein family.

The protein localises to the host cell junction. The protein resides in the host plasmodesma. Functionally, transports viral genome to neighboring plant cells directly through plasmosdesmata, without any budding. The movement protein allows efficient cell to cell propagation, by bypassing the host cell wall barrier. Acts by forming a tubular structure at the host plasmodesmata, enlarging it enough to allow free passage of virion capsids. This chain is Movement protein, found in Cucumber mosaic virus (strain C7-2) (CMV).